The sequence spans 66 residues: U-scoloptoxin(04)-Ssd2a (66 aa).

A signal peptide spans 1-19 (MKAIYILSVLLLMMLPILS).

The protein belongs to the scoloptoxin-04 family. In terms of processing, contains 2 disulfide bonds. Expressed by the venom gland.

Its subcellular location is the secreted. This Scolopendra dehaani (Thai centipede) protein is U-scoloptoxin(04)-Ssd2a.